Reading from the N-terminus, the 284-residue chain is Probable endonuclease 4 (284 aa).

Residues histidine 66, histidine 106, glutamate 142, aspartate 176, histidine 179, histidine 213, aspartate 226, histidine 228, and glutamate 258 each coordinate Zn(2+).

Belongs to the AP endonuclease 2 family. Zn(2+) serves as cofactor.

It carries out the reaction Endonucleolytic cleavage to 5'-phosphooligonucleotide end-products.. Its function is as follows. Endonuclease IV plays a role in DNA repair. It cleaves phosphodiester bonds at apurinic or apyrimidinic (AP) sites, generating a 3'-hydroxyl group and a 5'-terminal sugar phosphate. This is Probable endonuclease 4 from Natranaerobius thermophilus (strain ATCC BAA-1301 / DSM 18059 / JW/NM-WN-LF).